A 240-amino-acid chain; its full sequence is Ribonuclease 3 (240 aa).

An RNase III domain is found at 9-141 (VEEFQKKTGI…LLAAIYLDQG (133 aa)). Position 54 (E54) interacts with Mg(2+). D58 is an active-site residue. Mg(2+) contacts are provided by D127 and E130. The active site involves E130. The region spanning 168-237 (DYKTALQEIV…ARIAYEKLLK (70 aa)) is the DRBM domain.

Belongs to the ribonuclease III family. Homodimer. Requires Mg(2+) as cofactor.

It is found in the cytoplasm. The enzyme catalyses Endonucleolytic cleavage to 5'-phosphomonoester.. Digests double-stranded RNA. Involved in the processing of primary rRNA transcript to yield the immediate precursors to the large and small rRNAs (23S and 16S). Processes some mRNAs, and tRNAs when they are encoded in the rRNA operon. Processes pre-crRNA and tracrRNA of type II CRISPR loci if present in the organism. This Thermotoga petrophila (strain ATCC BAA-488 / DSM 13995 / JCM 10881 / RKU-1) protein is Ribonuclease 3.